A 99-amino-acid polypeptide reads, in one-letter code: Integration host factor subunit alpha (99 aa).

Belongs to the bacterial histone-like protein family. In terms of assembly, heterodimer of an alpha and a beta chain.

In terms of biological role, this protein is one of the two subunits of integration host factor, a specific DNA-binding protein that functions in genetic recombination as well as in transcriptional and translational control. This Alteromonas mediterranea (strain DSM 17117 / CIP 110805 / LMG 28347 / Deep ecotype) protein is Integration host factor subunit alpha.